Here is a 139-residue protein sequence, read N- to C-terminus: Two-component response regulator 24 (139 aa).

The region spanning 19-134 (TALVVDDSFV…KLLSILHKLN (116 aa)) is the Response regulatory domain. The residue at position 69 (Asp-69) is a 4-aspartylphosphate.

It belongs to the ARR family. Type-A subfamily. In terms of processing, two-component system major event consists of a His-to-Asp phosphorelay between a sensor histidine kinase (HK) and a response regulator (RR). In plants, the His-to-Asp phosphorelay involves an additional intermediate named Histidine-containing phosphotransfer protein (HPt). This multistep phosphorelay consists of a His-Asp-His-Asp sequential transfer of a phosphate group between first a His and an Asp of the HK protein, followed by the transfer to a conserved His of the HPt protein and finally the transfer to an Asp in the receiver domain of the RR protein. In terms of tissue distribution, mostly expressed in flowers and siliques, primarily restricted to pollen grains.

It localises to the nucleus. In terms of biological role, functions as a response regulator involved in His-to-Asp phosphorelay signal transduction system. Phosphorylation of the Asp residue in the receiver domain activates the ability of the protein to promote the transcription of target genes. Type-A response regulators seem to act as negative regulators of the cytokinin signaling. In Arabidopsis thaliana (Mouse-ear cress), this protein is Two-component response regulator 24.